We begin with the raw amino-acid sequence, 125 residues long: UPF0251 protein DSY3441 (125 aa).

Belongs to the UPF0251 family.

This chain is UPF0251 protein DSY3441, found in Desulfitobacterium hafniense (strain Y51).